A 101-amino-acid chain; its full sequence is RNA-binding protein Hfq (101 aa).

A Sm domain is found at 9–68; the sequence is DPFLNALRRERVPVSIYLVNGIKLQGQVESFDQFVILLKNTVSQMVYKHAISTVVPSRPV. The tract at residues 63-101 is disordered; sequence VPSRPVSHHSNNPSGSTNNYHGSNPSAPQQPQQDSDDAE. Residues 70-86 show a composition bias toward polar residues; that stretch reads HHSNNPSGSTNNYHGSN.

This sequence belongs to the Hfq family. As to quaternary structure, homohexamer.

Its function is as follows. RNA chaperone that binds small regulatory RNA (sRNAs) and mRNAs to facilitate mRNA translational regulation in response to envelope stress, environmental stress and changes in metabolite concentrations. Also binds with high specificity to tRNAs. Positively regulates the expression of the yst gene for heat-stable enterotoxin (Y-ST). This is RNA-binding protein Hfq from Yersinia enterocolitica.